The chain runs to 166 residues: Tegument protein UL55 homolog (166 aa).

The protein belongs to the alphaherpesvirinae HHV-1 UL55 family.

It localises to the virion tegument. It is found in the host nucleus matrix. The sequence is that of Tegument protein UL55 homolog (MDV070) from Gallid herpesvirus 2 (strain Chicken/Md5/ATCC VR-987) (GaHV-2).